Here is a 395-residue protein sequence, read N- to C-terminus: Flap endonuclease 1 (395 aa).

Residues 1–104 form an N-domain region; that stretch reads MGIKQLFQII…GELAKRFQRK (104 aa). Asp34 is a binding site for Mg(2+). Residues Arg47 and Arg70 each contribute to the DNA site. Mg(2+) is bound by residues Asp86, Glu158, Glu160, Asp179, and Asp181. Residues 122–253 are I-domain; that stretch reads DIEKFSRRTV…TTALKLIRDH (132 aa). Glu158 provides a ligand contact to DNA. 2 residues coordinate DNA: Gly231 and Asp233. Residue Asp233 participates in Mg(2+) binding. Residues 341–349 form an interaction with PCNA region; the sequence is QQARLEGFF. Residues 344–395 form a disordered region; it reads RLEGFFKPVPKTDAQKAAHKRKLEEKNEEKKKKLKQEKKDKAAAKSKPRGAA. Over residues 365 to 386 the composition is skewed to basic and acidic residues; sequence KLEEKNEEKKKKLKQEKKDKAA.

Belongs to the XPG/RAD2 endonuclease family. FEN1 subfamily. In terms of assembly, interacts with PCNA. Three molecules of FEN1 bind to one PCNA trimer with each molecule binding to one PCNA monomer. PCNA stimulates the nuclease activity without altering cleavage specificity. Requires Mg(2+) as cofactor. In terms of processing, phosphorylated. Phosphorylation upon DNA damage induces relocalization to the nuclear plasma.

It localises to the nucleus. The protein resides in the nucleolus. The protein localises to the nucleoplasm. Its subcellular location is the mitochondrion. Structure-specific nuclease with 5'-flap endonuclease and 5'-3' exonuclease activities involved in DNA replication and repair. During DNA replication, cleaves the 5'-overhanging flap structure that is generated by displacement synthesis when DNA polymerase encounters the 5'-end of a downstream Okazaki fragment. It enters the flap from the 5'-end and then tracks to cleave the flap base, leaving a nick for ligation. Also involved in the long patch base excision repair (LP-BER) pathway, by cleaving within the apurinic/apyrimidinic (AP) site-terminated flap. Acts as a genome stabilization factor that prevents flaps from equilibrating into structures that lead to duplications and deletions. Also possesses 5'-3' exonuclease activity on nicked or gapped double-stranded DNA, and exhibits RNase H activity. Also involved in replication and repair of rDNA and in repairing mitochondrial DNA. This chain is Flap endonuclease 1, found in Fusarium vanettenii (strain ATCC MYA-4622 / CBS 123669 / FGSC 9596 / NRRL 45880 / 77-13-4) (Fusarium solani subsp. pisi).